A 443-amino-acid chain; its full sequence is MRFYIKTFGCQMNENDSETMAGLLMKEGFTPASAPEEADVVIINTCAVRRKSEEKAYSELGQMLKIKRKRKLVVGVAGCVAEKEREKLLERGADFVLGTRAVLKVTEAVKRALQGEKVALFEDHLDEYTHELPRIRSSKHHAWVTIIFGCDRFCTYCIVPYTRGREKSRPMEDILEEVRELAKQGYREVTFLGQNVDAYGKDLKDGSSLAKLLEEASKIEGIERIWFLTSYPTDFSDELIEVIARNPKVAKSVHLPVQSGSNRILKLMNRSYTKEEYLALLERIRSKVPDVAISSDIIVGFPTETEEDFMETIDLVEKAQFERLNLAIYSPRKGTVAWKHYKDEVPYEEKVRRMQFLMNLQKRINRKLNERYKGKTVRVIVEAQAKNGLFYGRDIRNKIIAFEGEEWMIGRFADVKIEKITAGPLYGKVVWIEETPSPVSTDK.

One can recognise an MTTase N-terminal domain in the interval 1–114 (MRFYIKTFGC…VTEAVKRALQ (114 aa)). 6 residues coordinate [4Fe-4S] cluster: C10, C46, C79, C150, C154, and C157. The region spanning 136–367 (RSSKHHAWVT…MNLQKRINRK (232 aa)) is the Radical SAM core domain. Residues 370 to 431 (ERYKGKTVRV…AGPLYGKVVW (62 aa)) form the TRAM domain.

It belongs to the methylthiotransferase family. MiaB subfamily. As to quaternary structure, monomer. [4Fe-4S] cluster is required as a cofactor.

Its subcellular location is the cytoplasm. It catalyses the reaction N(6)-dimethylallyladenosine(37) in tRNA + (sulfur carrier)-SH + AH2 + 2 S-adenosyl-L-methionine = 2-methylsulfanyl-N(6)-dimethylallyladenosine(37) in tRNA + (sulfur carrier)-H + 5'-deoxyadenosine + L-methionine + A + S-adenosyl-L-homocysteine + 2 H(+). Functionally, catalyzes the methylthiolation of N6-(dimethylallyl)adenosine (i(6)A), leading to the formation of 2-methylthio-N6-(dimethylallyl)adenosine (ms(2)i(6)A) at position 37 in tRNAs that read codons beginning with uridine. The polypeptide is tRNA-2-methylthio-N(6)-dimethylallyladenosine synthase (Thermotoga sp. (strain RQ2)).